The chain runs to 273 residues: Dermonecrotic toxin LspiSicTox-betaIE1ii (273 aa).

Residue H5 is part of the active site. Mg(2+) is bound by residues E25 and D27. H41 (nucleophile) is an active-site residue. 2 disulfide bridges follow: C45-C51 and C47-C189. D85 provides a ligand contact to Mg(2+).

This sequence belongs to the arthropod phospholipase D family. Class II subfamily. Requires Mg(2+) as cofactor. As to expression, expressed by the venom gland.

The protein resides in the secreted. It carries out the reaction an N-(acyl)-sphingosylphosphocholine = an N-(acyl)-sphingosyl-1,3-cyclic phosphate + choline. The enzyme catalyses an N-(acyl)-sphingosylphosphoethanolamine = an N-(acyl)-sphingosyl-1,3-cyclic phosphate + ethanolamine. It catalyses the reaction a 1-acyl-sn-glycero-3-phosphocholine = a 1-acyl-sn-glycero-2,3-cyclic phosphate + choline. The catalysed reaction is a 1-acyl-sn-glycero-3-phosphoethanolamine = a 1-acyl-sn-glycero-2,3-cyclic phosphate + ethanolamine. Functionally, dermonecrotic toxins cleave the phosphodiester linkage between the phosphate and headgroup of certain phospholipids (sphingolipid and lysolipid substrates), forming an alcohol (often choline) and a cyclic phosphate. This toxin acts on sphingomyelin (SM). It may also act on ceramide phosphoethanolamine (CPE), lysophosphatidylcholine (LPC) and lysophosphatidylethanolamine (LPE), but not on lysophosphatidylserine (LPS), and lysophosphatidylglycerol (LPG). It acts by transphosphatidylation, releasing exclusively cyclic phosphate products as second products. Induces dermonecrosis, hemolysis, increased vascular permeability, edema, inflammatory response, and platelet aggregation. The chain is Dermonecrotic toxin LspiSicTox-betaIE1ii from Loxosceles spinulosa (Recluse spider).